The primary structure comprises 131 residues: TACTTGPQTISFPAGLIVSLNASVQSSRNESVEVKDSNGNTVSRGSGSSSSGGTFTVINMEPPTFISDGNDYTVELSPQATPGILQTESSRVDNGRLIWQNYAFGANDGGCIVGDRDFNDVFVLITGLVRG.

Cys-3 and Cys-111 are oxidised to a cystine. Residues 28–60 (RNESVEVKDSNGNTVSRGSGSSSSGGTFTVINM) are disordered. The span at 37-54 (SNGNTVSRGSGSSSSGGT) shows a compositional bias: low complexity. Positions 117 to 131 (DFNDVFVLITGLVRG) match the Pseudodomain-swapping motif motif.

In terms of biological role, binds to fucose and mannose in a calcium-dependent manner (in vitro). Acts as an agonist for human thrombopoietin receptor MPL (in vitro). Binding of sugar-moieties may promote the interaction with human MPL on the cell surface (in vitro). Catalyzes MPL dimerization and activation, and modulates internalization of the receptor (in vitro). Exhibits proliferation activity in murine recombinant Ba/F3 cells expressing human MPL (Ba/F3-huMPL) (in vitro). Induces phosphorylation of STAT5 in recombinant Ba/F3-huMPL cells, possibly by stimulating MPL on the cell surface to transduce signals via Jak/STAT signaling pathway (in vitro). Does not aggregate rabbit erythrocytes, indicating absent lectin-like agglutination activity (in vitro). The polypeptide is Thrombocorticin (Corticium sp. (Marine sponge)).